A 207-amino-acid polypeptide reads, in one-letter code: Small ribosomal subunit protein uS4c (207 aa).

The region spanning 92-156 (MRLDNILFRL…YQSIITKRIE (65 aa)) is the S4 RNA-binding domain.

Belongs to the universal ribosomal protein uS4 family. In terms of assembly, part of the 30S ribosomal subunit. Contacts protein S5. The interaction surface between S4 and S5 is involved in control of translational fidelity.

Its subcellular location is the plastid. It localises to the chloroplast. In terms of biological role, one of the primary rRNA binding proteins, it binds directly to 16S rRNA where it nucleates assembly of the body of the 30S subunit. With S5 and S12 plays an important role in translational accuracy. This chain is Small ribosomal subunit protein uS4c (rps4), found in Equisetum sylvaticum (Wood horsetail).